The chain runs to 94 residues: Ribonuclease P protein component 1 (94 aa).

Belongs to the eukaryotic/archaeal RNase P protein component 1 family. In terms of assembly, consists of a catalytic RNA component and at least 4-5 protein subunits.

Its subcellular location is the cytoplasm. It catalyses the reaction Endonucleolytic cleavage of RNA, removing 5'-extranucleotides from tRNA precursor.. Part of ribonuclease P, a protein complex that generates mature tRNA molecules by cleaving their 5'-ends. The polypeptide is Ribonuclease P protein component 1 (Haloarcula marismortui (strain ATCC 43049 / DSM 3752 / JCM 8966 / VKM B-1809) (Halobacterium marismortui)).